A 121-amino-acid polypeptide reads, in one-letter code: Chorion class A proteins Ld9 (121 aa).

Belongs to the chorion protein family.

Functionally, this protein is one of many from the eggshell of the gypsy moth. The protein is Chorion class A proteins Ld9 of Lymantria dispar (Gypsy moth).